The sequence spans 204 residues: Molybdenum cofactor guanylyltransferase (204 aa).

Residues 12–14, Lys-25, Asn-53, Asp-71, and Asp-101 each bind GTP; that span reads LAG. Asp-101 serves as a coordination point for Mg(2+).

The protein belongs to the MobA family. In terms of assembly, monomer. The cofactor is Mg(2+).

Its subcellular location is the cytoplasm. It carries out the reaction Mo-molybdopterin + GTP + H(+) = Mo-molybdopterin guanine dinucleotide + diphosphate. Functionally, transfers a GMP moiety from GTP to Mo-molybdopterin (Mo-MPT) cofactor (Moco or molybdenum cofactor) to form Mo-molybdopterin guanine dinucleotide (Mo-MGD) cofactor. This is Molybdenum cofactor guanylyltransferase from Ralstonia pickettii (strain 12J).